The following is a 150-amino-acid chain: CCAAT/enhancer-binding protein gamma (150 aa).

K3 is covalently cross-linked (Glycyl lysine isopeptide (Lys-Gly) (interchain with G-Cter in SUMO2)). A disordered region spans residues 27 to 94; sequence GLQQVPQLVP…QKAQDTLQRV (68 aa). A compositionally biased stretch (low complexity) spans 28–37; that stretch reads LQQVPQLVPA. Over residues 56 to 72 the composition is skewed to basic and acidic residues; it reads SPMDRNSDEYRQRRERN. The 64-residue stretch at 62–125 folds into the bZIP domain; that stretch reads SDEYRQRRER…SVLKDLFLEH (64 aa). The tract at residues 66-93 is basic motif; that stretch reads RQRRERNNMAVKKSRLKSKQKAQDTLQR. A leucine-zipper region spans residues 97 to 118; it reads LKEENERLEAKIKLLTKELSVL.

This sequence belongs to the bZIP family. C/EBP subfamily. Binds DNA as a dimer and can form stable heterodimers with CEBPA and CEBPB. Interacts with ZNF638; this interaction increases transcriptional activation.

Its subcellular location is the nucleus. Functionally, transcription factor that binds to the promoter and the enhancer regions of target genes. Binds to the enhancer element PRE-I (positive regulatory element-I) of the IL-4 gene. Binds to the promoter and the enhancer of the immunoglobulin heavy chain. Binds to GPE1, a cis-acting element in the G-CSF gene promoter. In Homo sapiens (Human), this protein is CCAAT/enhancer-binding protein gamma (CEBPG).